A 549-amino-acid polypeptide reads, in one-letter code: Polycomb group RING finger protein 3 homolog mig-32 (549 aa).

The disordered stretch occupies residues 1–263; sequence MTRKRPALAE…EESMRQKYGQ (263 aa). A compositionally biased stretch (low complexity) spans 12 to 29; sequence VSSSRSRVTRRSTTGAPS. Acidic residues-rich tracts occupy residues 38-49 and 87-100; these read PESDADSEDDYD and MDDD…DGEV. Residues 118-130 are compositionally biased toward basic residues; sequence KTAKLQTKKKKKK. Positions 134 to 144 are enriched in pro residues; it reads PETPPTSPSPS. Residues 145 to 156 are compositionally biased toward low complexity; it reads PSRSVSPSTTKS. The segment covering 205-235 has biased composition (basic and acidic residues); sequence EEIKLRERAERKARRIEEAKNRPKLTIEQKL. Positions 206–260 form a coiled coil; sequence EIKLRERAERKARRIEEAKNRPKLTIEQKLAKLRKKKERRERRKEQEKEESMRQK. Residues 236–247 are compositionally biased toward basic residues; that stretch reads AKLRKKKERRER. A compositionally biased stretch (basic and acidic residues) spans 248-258; that stretch reads RKEQEKEESMR. Residues 329-368 form an RING-type zinc finger; the sequence is CGICDGYIVDATTIIDCMHTFCKSCLLTYFESDNNTCPTC.

Component of a PRC1-like complex.

Its subcellular location is the nucleus. It is found in the nucleolus. In terms of biological role, component of a Polycomb group (PcG) multiprotein PRC1-like complex, a complex class required to maintain the transcriptionally repressive state of many genes, throughout development. Required for ubiquitination of histone H2A. Plays a role in the formation of the male-specific genital sensilla (simple sense organs) known as rays. Required for normal migration of the hermaphrodite specific neurons (HSN) and for extension of some neuronal processes. Represses vulval fates in hypodermal cells that do not normally contribute to vulval development. The polypeptide is Polycomb group RING finger protein 3 homolog mig-32 (Caenorhabditis elegans).